Reading from the N-terminus, the 114-residue chain is Hydrogenase maturation factor HypA (114 aa).

A Ni(2+)-binding site is contributed by His2. Positions 70, 73, 86, and 89 each coordinate Zn(2+).

Belongs to the HypA/HybF family.

In terms of biological role, involved in the maturation of [NiFe] hydrogenases. Required for nickel insertion into the metal center of the hydrogenase. The polypeptide is Hydrogenase maturation factor HypA (Rippkaea orientalis (strain PCC 8801 / RF-1) (Cyanothece sp. (strain PCC 8801))).